A 418-amino-acid chain; its full sequence is Probable serine/threonine-protein kinase DDB_G0280461 (418 aa).

One can recognise a Protein kinase domain in the interval lysine 14–isoleucine 271. ATP-binding positions include phenylalanine 20–valine 28 and lysine 41. The Proton acceptor role is filled by aspartate 139. 2 disordered regions span residues asparagine 327–asparagine 356 and serine 377–asparagine 418. Low complexity predominate over residues serine 377–glycine 402. Residues glycine 403–asparagine 418 show a composition bias toward basic residues.

The protein belongs to the protein kinase superfamily. TKL Ser/Thr protein kinase family.

It catalyses the reaction L-seryl-[protein] + ATP = O-phospho-L-seryl-[protein] + ADP + H(+). It carries out the reaction L-threonyl-[protein] + ATP = O-phospho-L-threonyl-[protein] + ADP + H(+). The sequence is that of Probable serine/threonine-protein kinase DDB_G0280461 from Dictyostelium discoideum (Social amoeba).